A 97-amino-acid chain; its full sequence is Lipolysis-activating peptide 1-alpha chain (97 aa).

The first 21 residues, 1-21 (MNITLFCSVFILISLAGLSVS), serve as a signal peptide directing secretion. Residues 25 to 88 (PGNYPMSLYG…FWAAHKNHCK (64 aa)) form the LCN-type CS-alpha/beta domain. Disulfide bonds link Cys39–Cys62, Cys48–Cys67, and Cys52–Cys69.

Belongs to the long (3 C-C) scorpion toxin superfamily. In terms of assembly, monomer (edited version) and heterodimer (non-edited version) of this alpha chain and a beta chain (AC D9U2A2). In terms of tissue distribution, expressed by the venom gland.

Its subcellular location is the secreted. Functionally, the heterodimer non-edited LVP1 induces lipolysis in rat adipocytes. Induction of lipolysis by LVP1 appears to be mediated through the beta-2 adrenergic receptor pathway (ADRB2). In terms of biological role, the edited BmKBTx-like, similar to beta-toxins, may modulate voltage-gated sodium channels (Nav) and may block voltage-gated potassium channels (Kv). The polypeptide is Lipolysis-activating peptide 1-alpha chain (Lychas mucronatus (Chinese swimming scorpion)).